Consider the following 923-residue polypeptide: Protein prickle (923 aa).

Residues 1–196 (MSYPYQKSHH…HPFHSPASAA (196 aa)) are disordered. Low complexity predominate over residues 11–34 (QTQQPQQNGHPQHQLMLQQQQQAD). The segment covering 37 to 49 (PHHHHHHHVHHAT) has biased composition (basic residues). Composition is skewed to low complexity over residues 59–73 (RSPL…LYSG) and 106–118 (MPGM…PPGM). The segment covering 122 to 134 (LGGGGGGGGGGSA) has biased composition (gly residues). Low complexity-rich tracts occupy residues 152–169 (STVT…SARS) and 184–196 (SSHH…ASAA). Residues 275–383 (GGGHNYSQSD…TVKQITTTLI (109 aa)) form the PET domain. 3 consecutive LIM zinc-binding domains span residues 382–446 (LICE…ETLK), 447–507 (PRCS…MFAE), and 508–570 (YCDY…GEPP). Disordered regions lie at residues 571–668 (TPSD…LDLT) and 703–867 (GPIA…SSAD). Positions 709-718 (NGNGPTGGGP) are enriched in gly residues. Polar residues predominate over residues 738 to 748 (ESPSFSGTNSP). Basic and acidic residues predominate over residues 777-786 (HSIKEVRFEG). Over residues 792–805 (LPRTKSYCQRNGGQ) the composition is skewed to polar residues. Acidic residues predominate over residues 817–827 (SDDDELAEDET). Basic and acidic residues predominate over residues 840-852 (QREQQRPVDDSDA). Low complexity predominate over residues 853–865 (RSVCSTCSSSSSS).

This sequence belongs to the prickle / espinas / testin family. In terms of assembly, interacts with dsh; PET and LIM domains interact with dsh DEP domain, in wing cells. Interacts with Vang in photoreceptor cells.

It is found in the cell membrane. Functionally, acts in a planar cell polarity (PCP) complex; polarization along the apical/basal axis of epithelial cells. PCP signaling in the wing disk requires the receptor fz and the cytoplasmic proteins dsh and pk. These act in a feedback loop leading to activation of the jnk cascade and subsequent polarized arrangement of hairs and bristles. Dgo and pk compete with one another for dsh binding, thereby modulating fz dsh activity and ensuring tight control over fz PCP signaling. Vang, stan and pk function together to regulate the establishment of tissue polarity in the adult eye. This is Protein prickle from Anopheles gambiae (African malaria mosquito).